The following is a 487-amino-acid chain: Arginine ADP-riboxanase OspC3 (487 aa).

The segment covering 1–14 has biased composition (polar residues); that stretch reads MRVETHSPSFTNPN. The segment at 1-41 is disordered; the sequence is MRVETHSPSFTNPNPAEACSGDPTEMGSRLSGVSRAPLPHA. 6 residues coordinate NAD(+): His-137, Gln-138, Ser-139, Ser-164, Asn-167, and Thr-168. Glu-325 is an active-site residue. ANK repeat units follow at residues 368-398 and 444-473; these read DAVT…EAKD and RGDT…DRNL.

Belongs to the OspC family.

It localises to the secreted. Its subcellular location is the host cytoplasm. It catalyses the reaction L-arginyl-[protein] + NAD(+) = ADP-riboxanated L-argininyl-[protein] + nicotinamide + NH4(+) + H(+). Its function is as follows. ADP-riboxanase effector that inhibits host cell pyroptosis. Acts by mediating arginine ADP-riboxanation of host CASP4/CASP11, blocking CASP4/CASP11 autoprocessing. This prevents CASP4 activation and ability to recognize and cleave GSDMD, thereby inhibiting LPS-induced pyroptosis. ADP-riboxanation takes place in two steps: OspC3 first catalyzes ADP-ribosylation of target Arg, and then initiates a deamination to remove one N-omega group. The chain is Arginine ADP-riboxanase OspC3 from Chromobacterium sp. (strain ATCC 53434 / SC 14030).